We begin with the raw amino-acid sequence, 78 residues long: Probable [Fe-S]-dependent transcriptional repressor (78 aa).

Iron-sulfur cluster contacts are provided by Cys56, Cys61, Cys64, and Cys70.

Belongs to the FeoC family.

Functionally, may function as a transcriptional regulator that controls feoABC expression. In Escherichia coli (strain UTI89 / UPEC), this protein is Probable [Fe-S]-dependent transcriptional repressor.